The following is a 105-amino-acid chain: Nucleoid-associated protein MXAN_1931 (105 aa).

Belongs to the YbaB/EbfC family. Homodimer.

It localises to the cytoplasm. Its subcellular location is the nucleoid. Its function is as follows. Binds to DNA and alters its conformation. May be involved in regulation of gene expression, nucleoid organization and DNA protection. The chain is Nucleoid-associated protein MXAN_1931 from Myxococcus xanthus (strain DK1622).